Consider the following 127-residue polypeptide: Large ribosomal subunit protein bL20 (127 aa).

Belongs to the bacterial ribosomal protein bL20 family.

In terms of biological role, binds directly to 23S ribosomal RNA and is necessary for the in vitro assembly process of the 50S ribosomal subunit. It is not involved in the protein synthesizing functions of that subunit. This Bifidobacterium longum (strain NCC 2705) protein is Large ribosomal subunit protein bL20.